Here is a 336-residue protein sequence, read N- to C-terminus: MERKGRERKLPGMKIVMPTPVETPTMNLEDRCLIKLTNESEEIEIAATDLVVLEELGKGGYGIVEKMQHRQSGIIMAVKRIKSSINDQSQKQMLNELDACRRSDCCPQMVRFYGAMFREGDVWICMEVMDTSLDKFYRHAYKIGKHIPEPFIGKMALSVIEGLNFMKEQLNLIHRDVKPSNILLNRHGQVKICDFGISGHLTNSMAKTVQAGCKPYMPPERIDGETKSAYDVRADVWSLGITIIEIAVGTHPYANWKTPFEQLKQVVKEPPPKLPMESGFSVDCQYFVKRCLEKDYNERPKYPELLAMPFMEQARNEKQFSMARFINEILDTVWRR.

Residues 50–311 (LVVLEELGKG…YPELLAMPFM (262 aa)) form the Protein kinase domain. Residues 56–64 (LGKGGYGIV) and Lys-79 each bind ATP. The active-site Proton acceptor is Asp-176. At Ser-204 the chain carries Phosphoserine. Thr-208 bears the Phosphothreonine mark.

The protein belongs to the protein kinase superfamily. STE Ser/Thr protein kinase family. MAP kinase kinase subfamily. Interacts with nsy-1. Interacts with unc-16. Mg(2+) serves as cofactor. As to expression, expressed in linker cell in males.

The enzyme catalyses L-seryl-[protein] + ATP = O-phospho-L-seryl-[protein] + ADP + H(+). It carries out the reaction L-threonyl-[protein] + ATP = O-phospho-L-threonyl-[protein] + ADP + H(+). The catalysed reaction is L-tyrosyl-[protein] + ATP = O-phospho-L-tyrosyl-[protein] + ADP + H(+). With respect to regulation, activated by nsy-1-mediated phosphorylation. Functionally, dual specificity protein kinase which acts as an essential component of the p38 signal transduction pathway which is also composed of upstream effector nsy-1 and downstream effector pmk-1. May phosphorylate pmk-1. Downstream of CaMKII unc-43 and adapter protein tir-1, plays a role in determining asymmetric cell fates in olfactory AWC neurons during neuronal development. Activation results in the repression of odorant receptor str-2 expression in one of the 2 AWC neurons. Involved in resistance to pathogenic Gram-positive and Gram-negative bacterial and fungal infection. Involved in resistance to the nematotoxic C.cinerea galectin Cgl2. Probably by promoting pmk-1-mediated activation of skn-1, involved in the up-regulation of gcs-1 and glutathione-S-transferase gst-4 expression upon bacterial infection. Probably downstream of tir-1, required for the expression of antimicrobial peptide nlp-29 in the epidermis in response to fungal infection or physical injury. Regulates susceptibility of B.thuringiensis pore-forming toxin Cry5B and Cry21A. Involved in the response to oxidative stress. May regulate transcription factor daf-16 localization during oxidative stress. By phosphorylating pmk-1, regulates skn-1 localization during oxidative stress. By phosphorylating and activating pmk-1, plays a role in the stabilization of transcription factor rnt-1 in the intestine during oxidative stress. Up-regulates expression of gcs-1 in intestine upon arsenite treatment. Regulates germline proliferation in response to osmotic stress, starvation and germline apoptosis induced by heavy metals, such as Cu(2+). In association with mek-1, regulates germline cell apoptosis in response to oxidative, osmotic and heat shock stresses. Plays a role downstream of tir-1/nsy-1 in regulating susceptibility to anoxia. In males, by regulating pqn-41 expression, involved in non-apoptotic death of the linker cell which guides gonad elongation during larval development. Involved in egg laying. This Caenorhabditis elegans protein is Dual specificity mitogen-activated protein kinase kinase sek-1.